Here is a 241-residue protein sequence, read N- to C-terminus: DNA repair protein RecO (241 aa).

The protein belongs to the RecO family.

Involved in DNA repair and RecF pathway recombination. This chain is DNA repair protein RecO, found in Xanthomonas campestris pv. campestris (strain B100).